The sequence spans 489 residues: Glutamyl-tRNA(Gln) amidotransferase subunit A (489 aa).

Active-site charge relay system residues include Lys-78 and Ser-153. Residue Ser-177 is the Acyl-ester intermediate of the active site.

The protein belongs to the amidase family. GatA subfamily. Heterotrimer of A, B and C subunits.

It carries out the reaction L-glutamyl-tRNA(Gln) + L-glutamine + ATP + H2O = L-glutaminyl-tRNA(Gln) + L-glutamate + ADP + phosphate + H(+). Its function is as follows. Allows the formation of correctly charged Gln-tRNA(Gln) through the transamidation of misacylated Glu-tRNA(Gln) in organisms which lack glutaminyl-tRNA synthetase. The reaction takes place in the presence of glutamine and ATP through an activated gamma-phospho-Glu-tRNA(Gln). This chain is Glutamyl-tRNA(Gln) amidotransferase subunit A, found in Nitratidesulfovibrio vulgaris (strain DP4) (Desulfovibrio vulgaris).